We begin with the raw amino-acid sequence, 342 residues long: Protein RecA (342 aa).

65 to 72 (GPESSGKT) serves as a coordination point for ATP.

It belongs to the RecA family.

The protein localises to the cytoplasm. In terms of biological role, can catalyze the hydrolysis of ATP in the presence of single-stranded DNA, the ATP-dependent uptake of single-stranded DNA by duplex DNA, and the ATP-dependent hybridization of homologous single-stranded DNAs. It interacts with LexA causing its activation and leading to its autocatalytic cleavage. This Teredinibacter turnerae (strain ATCC 39867 / T7901) protein is Protein RecA.